Here is a 551-residue protein sequence, read N- to C-terminus: Cleavage and polyadenylation specificity factor subunit 6 (551 aa).

Residues 1-213 (MADGVDHIDI…RGRFPGAVPG (213 aa)) form a necessary for interaction with NXF1 region. Positions 81 to 161 (IALYIGNLTW…QNPVVTPCNK (81 aa)) constitute an RRM domain. Residues 81-161 (IALYIGNLTW…QNPVVTPCNK (81 aa)) are necessary for interaction with NUDT21/CPSF5. Residues 81–161 (IALYIGNLTW…QNPVVTPCNK (81 aa)) form a necessary for nuclear paraspeckles localization region. Thr157 is modified (phosphothreonine). Polar residues predominate over residues 169–180 (MQSRKTTQSGQM). Disordered regions lie at residues 169–411 (MQSR…PLSE) and 477–551 (LHGI…YRHR). A GAR motif is present at residues 202 to 206 (RGRGR). Positions 207–219 (FPGAVPGGDRFPG) are enriched in low complexity. Pro residues-rich tracts occupy residues 220–265 (PAGP…PLAG), 285–366 (GQPP…PPPT), and 377–388 (GPPPTDPYGRPP). Positions 358–551 (NPAFFPPPTN…RDREREYRHR (194 aa)) are (Microbial infection) Binds to HIV-1 capsid protein p24 (CA). Residues 389-404 (PYDRGDYGPPGREMDT) show a composition bias toward basic and acidic residues. Phosphothreonine is present on residues Thr404 and Thr407. The interval 404–551 (TARTPLSEAE…RDREREYRHR (148 aa)) is sufficient for nuclear speckle localization. A necessary for RNA-binding region spans residues 405–551 (ARTPLSEAEF…RDREREYRHR (147 aa)). A necessary for interaction with SRSF3, SRSF7 and TRA2B/SFRS10 region spans residues 481–551 (ESKSYGSGSR…RDREREYRHR (71 aa)). Residues 489–503 (SRRERSRERDHSRSR) show a composition bias toward basic and acidic residues. Residues 490–551 (RRERSRERDH…RDREREYRHR (62 aa)) form an arg/Ser-rich domain region. Residues Ser494, Ser500, Ser511, Ser513, and Ser525 each carry the phosphoserine modification. Residues 504 to 514 (EKSRRHKSRSR) are compositionally biased toward basic residues. The interval 510 to 551 (KSRSRDRHDDYYRERSRERERHRDRDRDRDRERDREREYRHR) is sufficient for nuclear targeting. A compositionally biased stretch (basic and acidic residues) spans 515 to 551 (DRHDDYYRERSRERERHRDRDRDRDRERDREREYRHR).

It belongs to the RRM CPSF6/7 family. In terms of assembly, component of the cleavage factor Im (CFIm) complex which is a heterotetramer composed of two subunits of NUDT21/CPSF5 and two subunits of CPSF6 or CPSF7 or a heterodimer of CPSF6 and CPSF7. The cleavage factor Im (CFIm) complex associates with the CPSF and CSTF complexes to promote the assembly of the core mRNA 3'-processing machinery. Associates with the exon junction complex (EJC). Associates with the 80S ribosome particle. Interacts (via the RRM domain) with NUDT21/CPSF5; this interaction is direct and enhances binding to RNA. Interacts (via Arg/Ser-rich domain) with FIP1L1 (preferentially via unphosphorylated form and Arg/Glu/Asp-rich domain); this interaction mediates, at least in part, the interaction between the CFIm and CPSF complexes and may be inhibited by CPSF6 hyper-phosphorylation. Interacts (via N-terminus) with NXF1; this interaction is direct. Interacts with SRSF3. Interacts with SRSF7. Interacts with SNRNP70. Interacts with TRA2B/SFRS10. Interacts with UPF1. Interacts with UPF3B. Interacts with VIRMA. Interacts (via Arg/Ser-rich domain) with TNPO3; promoting nuclear import of CPSF6 independently of its phosphorylation status. Interacts with YTHDC1. As to quaternary structure, (Microbial infection) Interacts (via C-terminus) with HIV-1 capsid protein p24 (CA). In terms of processing, phosphorylated. Phosphorylated in the Arg/Ser-rich domain by SRPK1, in vitro. Symmetrically dimethylated on arginine residues in the GAR motif by PRMT5 in a WDR77- and CLNS1A-dependent manner. Asymmetrically dimethylated on arginine residues in the GAR motif by PRMT1.

The protein resides in the nucleus. It is found in the nucleoplasm. Its subcellular location is the nucleus speckle. It localises to the cytoplasm. Its function is as follows. Component of the cleavage factor Im (CFIm) complex that functions as an activator of the pre-mRNA 3'-end cleavage and polyadenylation processing required for the maturation of pre-mRNA into functional mRNAs. CFIm contributes to the recruitment of multiprotein complexes on specific sequences on the pre-mRNA 3'-end, so called cleavage and polyadenylation signals (pA signals). Most pre-mRNAs contain multiple pA signals, resulting in alternative cleavage and polyadenylation (APA) producing mRNAs with variable 3'-end formation. The CFIm complex acts as a key regulator of cleavage and polyadenylation site choice during APA through its binding to 5'-UGUA-3' elements localized in the 3'-untranslated region (UTR) for a huge number of pre-mRNAs. CPSF6 enhances NUDT21/CPSF5 binding to 5'-UGUA-3' elements localized upstream of pA signals and promotes RNA looping, and hence activates directly the mRNA 3'-processing machinery. Plays a role in mRNA export. In terms of biological role, (Microbial infection) Binds HIV-1 capsid-nucleocapsid (HIV-1 CA-NC) complexes and might thereby promote the integration of the virus in the nucleus of dividing cells (in vitro). The protein is Cleavage and polyadenylation specificity factor subunit 6 of Homo sapiens (Human).